The chain runs to 387 residues: 1-deoxy-D-xylulose 5-phosphate reductoisomerase (387 aa).

NADPH is bound by residues threonine 11, glycine 12, serine 13, isoleucine 14, glycine 37, arginine 38, asparagine 39, and asparagine 125. A 1-deoxy-D-xylulose 5-phosphate-binding site is contributed by lysine 126. An NADPH-binding site is contributed by glutamate 127. Aspartate 151 contributes to the Mn(2+) binding site. Positions 152, 153, 177, and 200 each coordinate 1-deoxy-D-xylulose 5-phosphate. Glutamate 153 is a Mn(2+) binding site. Residue glycine 206 coordinates NADPH. Residues serine 213, asparagine 218, lysine 219, and glutamate 222 each contribute to the 1-deoxy-D-xylulose 5-phosphate site. Mn(2+) is bound at residue glutamate 222.

Belongs to the DXR family. Requires Mg(2+) as cofactor. It depends on Mn(2+) as a cofactor.

The catalysed reaction is 2-C-methyl-D-erythritol 4-phosphate + NADP(+) = 1-deoxy-D-xylulose 5-phosphate + NADPH + H(+). It participates in isoprenoid biosynthesis; isopentenyl diphosphate biosynthesis via DXP pathway; isopentenyl diphosphate from 1-deoxy-D-xylulose 5-phosphate: step 1/6. In terms of biological role, catalyzes the NADPH-dependent rearrangement and reduction of 1-deoxy-D-xylulose-5-phosphate (DXP) to 2-C-methyl-D-erythritol 4-phosphate (MEP). The chain is 1-deoxy-D-xylulose 5-phosphate reductoisomerase from Desulforamulus reducens (strain ATCC BAA-1160 / DSM 100696 / MI-1) (Desulfotomaculum reducens).